The following is a 117-amino-acid chain: Ig heavy chain V region 345 (117 aa).

The first 19 residues, 1–19 (MNFGLRLIFLVLTLKGVKC), serve as a signal peptide directing secretion. Residues 20–49 (EVQLVESGGGLVKPGGSLKLSCAASGFAFS) form a framework-1 region. Cysteine 41 and cysteine 115 are disulfide-bonded. Residues 50-54 (SYDMS) form a complementarity-determining-1 region. Positions 55 to 68 (WVRQTPEKRLEWVA) are framework-2. The tract at residues 69–85 (YISSGGGSTYYPDTVKG) is complementarity-determining-2. Positions 86–117 (RFTISRDNAKNTLYLQMSSLKSEDTAMYYCAR) are framework-3.

The sequence is that of Ig heavy chain V region 345 from Mus musculus (Mouse).